Consider the following 246-residue polypeptide: Ribosomal RNA small subunit methyltransferase J (246 aa).

Residues 115-116 (ER) and Asp-169 contribute to the S-adenosyl-L-methionine site.

The protein belongs to the methyltransferase superfamily. RsmJ family.

It is found in the cytoplasm. It catalyses the reaction guanosine(1516) in 16S rRNA + S-adenosyl-L-methionine = N(2)-methylguanosine(1516) in 16S rRNA + S-adenosyl-L-homocysteine + H(+). Functionally, specifically methylates the guanosine in position 1516 of 16S rRNA. This chain is Ribosomal RNA small subunit methyltransferase J, found in Buchnera aphidicola subsp. Acyrthosiphon pisum (strain APS) (Acyrthosiphon pisum symbiotic bacterium).